The primary structure comprises 243 residues: CD48 antigen (243 aa).

A signal peptide spans 1–26 (MCSRGWDSCLALELLLLPLSLLVTSI). Ig-like C2-type domains lie at 29–127 (HLVH…KLQV) and 132–212 (PKPV…VCLS). 5 N-linked (GlcNAc...) asparagine glycosylation sites follow: N40, N44, N104, N162, and N189. A disulfide bridge connects residues C154 and C196. A lipid anchor (GPI-anchor amidated serine) is attached at S220. The propeptide at 221–243 (FGVEWIASWLVVTVPTILGLLLT) is removed in mature form.

In terms of assembly, interacts with CD2. Interacts with CD244; this interaction is possible not only on different cells (trans interaction) but also on the same cell (cis interaction). Interacts with LCK. As to expression, widely expressed on all hematopoietic cells.

It is found in the cell membrane. The protein localises to the membrane raft. It localises to the secreted. Its function is as follows. Glycosylphosphatidylinositol (GPI)-anchored cell surface glycoprotein that interacts via its N-terminal immunoglobulin domain with cell surface receptors including CD244/2B4 or CD2 to regulate immune cell function and activation. Participates in T-cell signaling transduction by associating with CD2 and efficiently bringing the Src family protein kinase LCK and LAT to the TCR/CD3 complex. In turn, promotes LCK phosphorylation and subsequent activation. Induces the phosphorylation of the cytoplasmic immunoreceptortyrosine switch motifs (ITSMs) of CD244 initiating a series of signaling events that leads to the generation of the immunological synapse and the directed release of cytolytic granules containing perforin and granzymes by T-lymphocytes and NK-cells. This Homo sapiens (Human) protein is CD48 antigen (CD48).